The chain runs to 863 residues: Glycogen phosphorylase (863 aa).

Lysine 618 carries the post-translational modification N6-(pyridoxal phosphate)lysine.

The protein belongs to the glycogen phosphorylase family. Requires pyridoxal 5'-phosphate as cofactor.

The catalysed reaction is [(1-&gt;4)-alpha-D-glucosyl](n) + phosphate = [(1-&gt;4)-alpha-D-glucosyl](n-1) + alpha-D-glucose 1-phosphate. Phosphorylase is an important allosteric enzyme in carbohydrate metabolism. Enzymes from different sources differ in their regulatory mechanisms and in their natural substrates. However, all known phosphorylases share catalytic and structural properties. The sequence is that of Glycogen phosphorylase (glgP) from Mycobacterium tuberculosis (strain CDC 1551 / Oshkosh).